We begin with the raw amino-acid sequence, 165 residues long: Growth arrest and DNA damage-inducible protein GADD45 alpha (165 aa).

A Phosphothreonine modification is found at threonine 2.

Belongs to the GADD45 family. As to quaternary structure, interacts with AURKA, PCNA, GADD45GIP1 and MAPK14.

The protein resides in the nucleus. In terms of biological role, might affect PCNA interaction with some CDK (cell division protein kinase) complexes; stimulates DNA excision repair in vitro and inhibits entry of cells into S phase. In T-cells, functions as a regulator of p38 MAPKs by inhibiting p88 phosphorylation and activity. The protein is Growth arrest and DNA damage-inducible protein GADD45 alpha (GADD45A) of Felis catus (Cat).